The sequence spans 387 residues: Exodeoxyribonuclease 7 large subunit (387 aa).

The protein belongs to the XseA family. Heterooligomer composed of large and small subunits.

Its subcellular location is the cytoplasm. It carries out the reaction Exonucleolytic cleavage in either 5'- to 3'- or 3'- to 5'-direction to yield nucleoside 5'-phosphates.. Bidirectionally degrades single-stranded DNA into large acid-insoluble oligonucleotides, which are then degraded further into small acid-soluble oligonucleotides. The polypeptide is Exodeoxyribonuclease 7 large subunit (Campylobacter jejuni subsp. jejuni serotype O:23/36 (strain 81-176)).